Here is a 159-residue protein sequence, read N- to C-terminus: Transcription elongation factor GreA (159 aa).

The stretch at 44 to 75 (SENAEYDAAREQQSQTEARIADLENKLSTATI) forms a coiled coil.

Belongs to the GreA/GreB family.

Functionally, necessary for efficient RNA polymerase transcription elongation past template-encoded arresting sites. The arresting sites in DNA have the property of trapping a certain fraction of elongating RNA polymerases that pass through, resulting in locked ternary complexes. Cleavage of the nascent transcript by cleavage factors such as GreA or GreB allows the resumption of elongation from the new 3'terminus. GreA releases sequences of 2 to 3 nucleotides. This chain is Transcription elongation factor GreA, found in Chlorobium limicola (strain DSM 245 / NBRC 103803 / 6330).